The following is a 131-amino-acid chain: MDKEECSSSESGWTTYLSSPIKVDEDEVVDEDYYYEGYNIYNYSSKVEHEEERNKDSDDSMASDASSGPNYQRFHQKNKALDLKNGKNEGNSKSKNDDDHHNHYHDGKKTSNSYRKKDKKKRENKSTYRMK.

Disordered stretches follow at residues 1-21 (MDKE…SSPI) and 40-131 (IYNY…YRMK). The segment covering 8–18 (SSESGWTTYLS) has biased composition (polar residues). Positions 11–16 (SGWTTY) match the SOFL-A motif. The span at 46 to 58 (KVEHEEERNKDSD) shows a compositional bias: basic and acidic residues. Residues 60–69 (SMASDASSGP) carry the SOFL-B motif. The segment covering 79 to 109 (KALDLKNGKNEGNSKSKNDDDHHNHYHDGKK) has biased composition (basic and acidic residues). Positions 107–114 (GKKTSNSY) match the Nuclear localization signal motif. A compositionally biased stretch (basic residues) spans 114-131 (YRKKDKKKRENKSTYRMK).

The protein belongs to the SOFL plant protein family. As to expression, expressed, at low levels, in seedlings, roots, flowers and siliques.

The protein resides in the cytoplasm. The protein localises to the nucleus. Its function is as follows. Involved in cytokinin-mediated development. This is Protein SOB FIVE-LIKE 4 from Arabidopsis thaliana (Mouse-ear cress).